Reading from the N-terminus, the 235-residue chain is Thiamine import ATP-binding protein ThiQ (235 aa).

One can recognise an ABC transporter domain in the interval 2–230 (LKLENLTYRY…TVPEAAILGM (229 aa)). 32-39 (GPSGAGKS) serves as a coordination point for ATP.

This sequence belongs to the ABC transporter superfamily. Thiamine importer (TC 3.A.1.19.1) family. As to quaternary structure, the complex is composed of two ATP-binding proteins (ThiQ), two transmembrane proteins (ThiP) and a solute-binding protein (ThiB).

The protein resides in the cell inner membrane. The enzyme catalyses thiamine(out) + ATP + H2O = thiamine(in) + ADP + phosphate + H(+). Its function is as follows. Part of the ABC transporter complex ThiBPQ involved in thiamine import. Responsible for energy coupling to the transport system. This chain is Thiamine import ATP-binding protein ThiQ, found in Photorhabdus laumondii subsp. laumondii (strain DSM 15139 / CIP 105565 / TT01) (Photorhabdus luminescens subsp. laumondii).